A 558-amino-acid polypeptide reads, in one-letter code: Delta-1-pyrroline-5-carboxylate dehydrogenase, mitochondrial (558 aa).

NAD(+)-binding positions include serine 198, lysine 223, and 276-280 (GSTGV). Glutamate 306 acts as the Proton acceptor in catalysis. Cysteine 340 functions as the Nucleophile in the catalytic mechanism. An NAD(+)-binding site is contributed by glutamate 438.

The protein belongs to the aldehyde dehydrogenase family.

The protein resides in the mitochondrion matrix. The catalysed reaction is L-glutamate 5-semialdehyde + NAD(+) + H2O = L-glutamate + NADH + 2 H(+). The protein operates within amino-acid degradation; L-proline degradation into L-glutamate; L-glutamate from L-proline: step 2/2. In terms of biological role, irreversible conversion of delta-1-pyrroline-5-carboxylate (P5C), derived either from proline or ornithine, to glutamate. This is a necessary step in the pathway interconnecting the urea and tricarboxylic acid cycles. The polypeptide is Delta-1-pyrroline-5-carboxylate dehydrogenase, mitochondrial (Dictyostelium discoideum (Social amoeba)).